Here is a 327-residue protein sequence, read N- to C-terminus: Probable cell division protein WhiA (327 aa).

The H-T-H motif DNA-binding region spans 275-308 (SLEELGQLADPPMTKDAVAGRIRRLLSMADRRAR).

This sequence belongs to the WhiA family.

In terms of biological role, involved in cell division and chromosome segregation. In Nocardia farcinica (strain IFM 10152), this protein is Probable cell division protein WhiA.